Reading from the N-terminus, the 453-residue chain is UDP-N-acetylmuramoylalanine--D-glutamate ligase (453 aa).

Glycine 119–threonine 125 contacts ATP.

The protein belongs to the MurCDEF family.

It is found in the cytoplasm. It carries out the reaction UDP-N-acetyl-alpha-D-muramoyl-L-alanine + D-glutamate + ATP = UDP-N-acetyl-alpha-D-muramoyl-L-alanyl-D-glutamate + ADP + phosphate + H(+). It participates in cell wall biogenesis; peptidoglycan biosynthesis. In terms of biological role, cell wall formation. Catalyzes the addition of glutamate to the nucleotide precursor UDP-N-acetylmuramoyl-L-alanine (UMA). The chain is UDP-N-acetylmuramoylalanine--D-glutamate ligase from Streptococcus uberis (strain ATCC BAA-854 / 0140J).